The chain runs to 216 residues: Refilin-B (216 aa).

Residues 1–55 form a disordered region; sequence MVGRLSLQDVPELVDTKKKGDGVLDSPDSGLPPSPSPSHWGLAATAGGGGERAPV. Residues Ser-6 and Ser-26 each carry the phosphoserine modification.

This sequence belongs to the Refilin family. In terms of assembly, interacts with FLNA and FLNB. As to expression, detected in various tissues, with highest expression in lung, followed by spleen.

The protein localises to the cytoplasm. The protein resides in the cytoskeleton. Functionally, involved in the regulation of the perinuclear actin network and nuclear shape through interaction with filamins. Plays an essential role in the formation of cartilaginous skeletal elements. This is Refilin-B from Mus musculus (Mouse).